The following is a 336-amino-acid chain: Inositol 2-dehydrogenase (336 aa).

The protein belongs to the Gfo/Idh/MocA family. Homotetramer.

It carries out the reaction myo-inositol + NAD(+) = scyllo-inosose + NADH + H(+). Involved in the oxidation of myo-inositol (MI) to 2-keto-myo-inositol (2KMI or 2-inosose). In Pseudomonas savastanoi pv. phaseolicola (strain 1448A / Race 6) (Pseudomonas syringae pv. phaseolicola (strain 1448A / Race 6)), this protein is Inositol 2-dehydrogenase.